We begin with the raw amino-acid sequence, 1362 residues long: ATP-dependent RNA helicase dhx29 (1362 aa).

A compositionally biased stretch (basic residues) spans Met-1–His-10. The interval Met-1–Ser-76 is disordered. Residues Gly-18–Arg-27 show a composition bias toward low complexity. Residues Ala-28 to Lys-41 are compositionally biased toward basic and acidic residues. Residues Ser-66–Ser-76 are compositionally biased toward low complexity. Positions Glu-89 to Asn-109 form a coiled coil. Disordered regions lie at residues Gln-182–Asn-215 and Glu-229–Glu-257. Residues Gly-231–Lys-242 are compositionally biased toward acidic residues. Positions Glu-243–Glu-257 are enriched in basic and acidic residues. Residues Gln-285–His-305 are a coiled coil. The interval Val-317 to Leu-336 is disordered. Positions Leu-576–Ser-749 constitute a Helicase ATP-binding domain. ATP is bound at residue Gly-589–Ser-596. Positions Asp-696–His-699 match the DEAH box motif. The Helicase C-terminal domain occupies Asp-852–Asp-1021.

This sequence belongs to the DEAD box helicase family. DEAH subfamily. In terms of assembly, part of the 43S pre-initiation complex (PIC).

It is found in the cytoplasm. The enzyme catalyses ATP + H2O = ADP + phosphate + H(+). ATP-binding RNA helicase involved in translation initiation. Part of the 43S pre-initiation complex that is required for efficient initiation on mRNAs of higher eukaryotes with structured 5'-UTRs by promoting efficient NTPase-dependent 48S complex formation. Specifically binds to the 40S ribosome near the mRNA entrance. Does not possess a processive helicase activity. In Xenopus laevis (African clawed frog), this protein is ATP-dependent RNA helicase dhx29.